Here is an 87-residue protein sequence, read N- to C-terminus: Phosphoribosyl-ATP pyrophosphatase (87 aa).

This sequence belongs to the PRA-PH family.

It localises to the cytoplasm. It catalyses the reaction 1-(5-phospho-beta-D-ribosyl)-ATP + H2O = 1-(5-phospho-beta-D-ribosyl)-5'-AMP + diphosphate + H(+). It participates in amino-acid biosynthesis; L-histidine biosynthesis; L-histidine from 5-phospho-alpha-D-ribose 1-diphosphate: step 2/9. In Nocardioides sp. (strain ATCC BAA-499 / JS614), this protein is Phosphoribosyl-ATP pyrophosphatase.